The chain runs to 410 residues: Peptidase T (410 aa).

Zn(2+) is bound at residue His78. Asp80 is an active-site residue. Asp140 contributes to the Zn(2+) binding site. The Proton acceptor role is filled by Glu173. Zn(2+) is bound by residues Glu174, Asp196, and His379.

This sequence belongs to the peptidase M20B family. It depends on Zn(2+) as a cofactor.

The protein localises to the cytoplasm. It catalyses the reaction Release of the N-terminal residue from a tripeptide.. Cleaves the N-terminal amino acid of tripeptides. This Pectobacterium carotovorum subsp. carotovorum (strain PC1) protein is Peptidase T.